The chain runs to 341 residues: Holliday junction branch migration complex subunit RuvB (341 aa).

A large ATPase domain (RuvB-L) region spans residues 4–185 (TDRLIVPTAV…FGIVARLEFY (182 aa)). Residues Leu24, Arg25, Gly66, Lys69, Thr70, Thr71, 132 to 134 (EDF), Arg175, Tyr185, and Arg222 each bind ATP. Thr70 lines the Mg(2+) pocket. Residues 186–256 (SAEELGYIVH…VADAALVMLD (71 aa)) are small ATPAse domain (RuvB-S). The segment at 259–341 (RAGLDVMDRK…ATPASDAELF (83 aa)) is head domain (RuvB-H). Positions 295, 314, and 319 each coordinate DNA.

The protein belongs to the RuvB family. Homohexamer. Forms an RuvA(8)-RuvB(12)-Holliday junction (HJ) complex. HJ DNA is sandwiched between 2 RuvA tetramers; dsDNA enters through RuvA and exits via RuvB. An RuvB hexamer assembles on each DNA strand where it exits the tetramer. Each RuvB hexamer is contacted by two RuvA subunits (via domain III) on 2 adjacent RuvB subunits; this complex drives branch migration. In the full resolvosome a probable DNA-RuvA(4)-RuvB(12)-RuvC(2) complex forms which resolves the HJ.

The protein localises to the cytoplasm. The catalysed reaction is ATP + H2O = ADP + phosphate + H(+). The RuvA-RuvB-RuvC complex processes Holliday junction (HJ) DNA during genetic recombination and DNA repair, while the RuvA-RuvB complex plays an important role in the rescue of blocked DNA replication forks via replication fork reversal (RFR). RuvA specifically binds to HJ cruciform DNA, conferring on it an open structure. The RuvB hexamer acts as an ATP-dependent pump, pulling dsDNA into and through the RuvAB complex. RuvB forms 2 homohexamers on either side of HJ DNA bound by 1 or 2 RuvA tetramers; 4 subunits per hexamer contact DNA at a time. Coordinated motions by a converter formed by DNA-disengaged RuvB subunits stimulates ATP hydrolysis and nucleotide exchange. Immobilization of the converter enables RuvB to convert the ATP-contained energy into a lever motion, pulling 2 nucleotides of DNA out of the RuvA tetramer per ATP hydrolyzed, thus driving DNA branch migration. The RuvB motors rotate together with the DNA substrate, which together with the progressing nucleotide cycle form the mechanistic basis for DNA recombination by continuous HJ branch migration. Branch migration allows RuvC to scan DNA until it finds its consensus sequence, where it cleaves and resolves cruciform DNA. This Thiobacillus denitrificans (strain ATCC 25259 / T1) protein is Holliday junction branch migration complex subunit RuvB.